Reading from the N-terminus, the 411-residue chain is Keratin, type I cytoskeletal 12 (411 aa).

The head stretch occupies residues 1–42; it reads DHDYEFPGIQAFAGLGMGFGGSPGGGSLYLPSGNDGGLLSGS. A coil 1A region spans residues 43 to 78; it reads EKETMQNLNDRLASYLDKVRALEDANAELENKIREW. The 317-residue stretch at 43-359 folds into the IF rod domain; that stretch reads EKETMQNLND…RLLDGEAQGD (317 aa). The linker 1 stretch occupies residues 83–101; that stretch reads GHGHGDCGPQHDYSKYHPL. Residues 102–193 form a coil 1B region; it reads IEDLRNKIIS…KNHEEELQSC (92 aa). The interval 194–216 is linker 12; that stretch reads RAGGPGEVSVEMDAAPGVDLTRL. The coil 2 stretch occupies residues 217-354; sequence LNDMRAQYEA…IETYRRLLDG (138 aa). The tail stretch occupies residues 355–411; sequence EAQGDGLDESSAMTGSRSQAQSIDSSKDPSKTRKIKTIVQEVVNGEVVSSQVQEIQN. The disordered stretch occupies residues 356 to 387; that stretch reads AQGDGLDESSAMTGSRSQAQSIDSSKDPSKTR. Residues 365–378 show a composition bias toward polar residues; that stretch reads SAMTGSRSQAQSID.

Belongs to the intermediate filament family. Heterotetramer of two type I and two type II keratins. Keratin-3 associates with keratin-12. As to expression, cornea specific. Associated mainly with all layers of the central corneal epithelium and also found in the suprabasal limbal epithelium.

Involved in corneal epithelium organization, integrity and corneal keratin expression. This Oryctolagus cuniculus (Rabbit) protein is Keratin, type I cytoskeletal 12 (KRT12).